A 1478-amino-acid polypeptide reads, in one-letter code: MSSFNKKIAKDIKKIKISLAAQDDVKNWSCGEVTKPETINYKSYKPERDGLFDELIFGPTTDFKCPICGTKYKKSDENTICEKTPMCQKYQPVILPKMVRRSRMGHIHLENPVVHFWFFKIDHSIISKLLGLRIANSNKTVSKGDLEKLIYYKSHIVLEDGGLKKLQKNAIIDISDAAIIYADALEELKERFEKDTEEYEIISEALAELESYAVSQTGQDYGIDFYEYNEIIHEFSKAKISTGSKAIEYLLENIDLKAEAEFIESEIEKINQHFDNNPTASIKAQERSKLYKRLAVVNAFIHSGQDPKSMLIYDLPVIPADLRPLVQLDGGRHSTSDVNELYRRIIIRNNRLKKWEETDAPMLIKQNEFRMIQEAVDALIDNSRKKPAPVTSKDNRPLKSISDTLTRKKGRFRQNLLGKRVDYSGRSVIVVGPELKMHQVGVPREMAAKLFEPWIIKELINGDSHINSIKAGKKAIENLDPIIWPYVEKAIEGKVVLLNRAPTLHRLSIQAYEPVLIRGKAIKLHPLSCTPFNADFDGDQMAIHVPISEEAVREARELMLASKNILGPKDGEPIINPAQDIILGLYYLTMEKAAAIDGDKVVGEGKFFATYDEMLLAYENKLVSLHARIALPISEINKKRLNYSPENKYIISTVGKFIFNRAFPESFEFIFGKHVEYVNKTDANGEVKLSEKEVVYTSNNKNQLEQFLLPYGQNFAEVIAKMPLNLPLSKKDVAKIVRRVYDKYVAIVTKSDVASVINQINANEINQIFDLCAELKDFNGKPIDVNHVEILEKIIVEEYKAISQEIIVRERTEEPIWTVNDYTKLLEIVWFKYTNIVANVLDNIKELGYKFSTISGTTISISDVITHQDTKSRIAEGDKYIELLKDYFDQGLMTDDERYNATIAKWAAIKDDIEKDLKKLTKLYPDNSLFMMFNSGARGNSSNFVQLAGMRGLMNNNTKVLKADAENERVVRSTVEIPVKSSFLNGLTAYEFYSSTHGARKGLTDTALNTAKSGYLTRRLVDVAQGITVREDDCGTDYGFQVKDILDTKTNTVIEALYDRIEGRFTNKAIYDKNGKLIVDADELITPEIATEIVENGIKKVEIRSVLSCYTPNGVCKKCYGKDLALNRVVNIGEAVGVIAAQSIGEPGTQLTMRTFHTGGVAGVEDITGGFGRLIELIDAYDSPWGRPAVIANYYGRITDIKRVKEGSESVEYDVITQEYKTRDGKVNTVEYKTRAGRKIRVKINDKVTPGQKIVEGPIVLNNLLRVGDTRLVQNYILKEVQKLYRLQGITISDKYIEIIIRQMLSKILITDSGDSDFFNGSLVDIHVYQKESARLISEGKKPPFGEVKIKGAKQIPLLSDSFLAAASYQETPKILVNASIKAQVDRLKGLKENIILGHKIPAGTNSNFEENGKYDLRNPKSYFADKYDPDIKTVKFVADENEILNMEHRVEIQHIFDEFQSEAFNANVIEFTDDSDN.

Residues Asp535, Asp537, and Asp539 each coordinate Mg(2+). The Zn(2+) site is built by Cys1034, Cys1109, Cys1116, and Cys1119.

Belongs to the RNA polymerase beta' chain family. In terms of assembly, the RNAP catalytic core consists of 2 alpha, 1 beta, 1 beta' and 1 omega subunit. When a sigma factor is associated with the core the holoenzyme is formed, which can initiate transcription. The cofactor is Mg(2+). It depends on Zn(2+) as a cofactor.

The catalysed reaction is RNA(n) + a ribonucleoside 5'-triphosphate = RNA(n+1) + diphosphate. DNA-dependent RNA polymerase catalyzes the transcription of DNA into RNA using the four ribonucleoside triphosphates as substrates. This is DNA-directed RNA polymerase subunit beta' from Mycoplasmopsis agalactiae (strain NCTC 10123 / CIP 59.7 / PG2) (Mycoplasma agalactiae).